We begin with the raw amino-acid sequence, 209 residues long: Cerebral peptide 1 (209 aa).

The signal sequence occupies residues 1–20 (MLLAKISVVVLLLAIDGTSS). A compositionally biased stretch (polar residues) spans 21 to 39 (SESTDNVVLSSSPDSQKAA). Residues 21 to 43 (SESTDNVVLSSSPDSQKAATSRH) constitute a propeptide, connecting peptide 1. A disordered region spans residues 21–56 (SESTDNVVLSSSPDSQKAATSRHKRAPGWGKRSSLN). W49 bears the Tryptophan amide mark. Positions 53–77 (SSLNDEDLFADSDSAQELLDSVAAL) are cleaved as a propeptide — connecting peptide 2. Tryptophan amide is present on residues W83 and W105. The segment at 98–169 (EAKRAPGWGK…APGWGKRSGG (72 aa)) is disordered. Residues 109-122 (GQEIDVDEDGSEQE) constitute a propeptide, connecting peptide 4. Residues W128, W135, W142, W149, W156, and W163 each carry the tryptophan amide modification. Residues 167–191 (SGGDYCETLEKMVDAYIYKAVEVDS) constitute a propeptide, connecting peptide 5. The cysteines at positions 172 and 197 are disulfide-linked.

Homodimer; disulfide-linked. In terms of tissue distribution, cerebral peptide 1 is expressed in the cerebral, pedal and buccal ganglia and B1 and B2 neurons. APGW-amide is expressed in buccal ganglia and several neurons.

It localises to the secreted. May function as a peptide transmitter. This Aplysia californica (California sea hare) protein is Cerebral peptide 1.